Here is a 262-residue protein sequence, read N- to C-terminus: Cytochrome c oxidase subunit 3 (262 aa).

Helical transmembrane passes span 11–31 (LVEPSPWPLVGGSAAFTLTVG), 32–52 (LVMWFHYNSISLMILGLVMIV), 83–103 (GMVLFIVSEVFFFLAFFWAFF), 125–147 (LNAFAVPLLNTAVLLSSGVTVTW), 160–180 (AIQSLAITVMLGLYFTGLQAW), 198–218 (FFVATGFHGLHVIIGSTFLMV), and 240–260 (AWYWHFVDVVWLFLYVCIYWW).

It belongs to the cytochrome c oxidase subunit 3 family. Component of the cytochrome c oxidase (complex IV, CIV), a multisubunit enzyme composed of a catalytic core of 3 subunits and several supernumerary subunits. The complex exists as a monomer or a dimer and forms supercomplexes (SCs) in the inner mitochondrial membrane with ubiquinol-cytochrome c oxidoreductase (cytochrome b-c1 complex, complex III, CIII).

It localises to the mitochondrion inner membrane. It catalyses the reaction 4 Fe(II)-[cytochrome c] + O2 + 8 H(+)(in) = 4 Fe(III)-[cytochrome c] + 2 H2O + 4 H(+)(out). Component of the cytochrome c oxidase, the last enzyme in the mitochondrial electron transport chain which drives oxidative phosphorylation. The respiratory chain contains 3 multisubunit complexes succinate dehydrogenase (complex II, CII), ubiquinol-cytochrome c oxidoreductase (cytochrome b-c1 complex, complex III, CIII) and cytochrome c oxidase (complex IV, CIV), that cooperate to transfer electrons derived from NADH and succinate to molecular oxygen, creating an electrochemical gradient over the inner membrane that drives transmembrane transport and the ATP synthase. Cytochrome c oxidase is the component of the respiratory chain that catalyzes the reduction of oxygen to water. Electrons originating from reduced cytochrome c in the intermembrane space (IMS) are transferred via the dinuclear copper A center (CU(A)) of subunit 2 and heme A of subunit 1 to the active site in subunit 1, a binuclear center (BNC) formed by heme A3 and copper B (CU(B)). The BNC reduces molecular oxygen to 2 water molecules using 4 electrons from cytochrome c in the IMS and 4 protons from the mitochondrial matrix. The polypeptide is Cytochrome c oxidase subunit 3 (COIII) (Branchiostoma floridae (Florida lancelet)).